The sequence spans 382 residues: LIM homeobox transcription factor 1-alpha (382 aa).

LIM zinc-binding domains are found at residues 33-92 and 92-154; these read SVCE…LFAV and VKCG…EREL. Disordered regions lie at residues 161–208 and 252–286; these read AASD…QQRR and KLAR…MEGI. The segment at residues 195–254 is a DNA-binding region (homeobox); it reads PKRPRTILTTQQRRAFKASFEVSSKPCRKVRETLAAETGLSVRVVQVWFQNQRAKMKKLA. Residues 256–269 show a composition bias toward low complexity; the sequence is RQQQQQQDQQNTQR.

It is found in the nucleus. Functionally, acts as a transcriptional activator by binding to an A/T-rich sequence, the FLAT element, in the insulin gene promoter. Required for development of the roof plate and, in turn, for specification of dorsal cell fates in the CNS and developing vertebrae. In Mus musculus (Mouse), this protein is LIM homeobox transcription factor 1-alpha (Lmx1a).